The primary structure comprises 251 residues: MSGHSKWATIKRKKAATDQKRGSLFTKLVKEITIAAKMGGGDPTGNPRLRLAIDTARANSMPMDNIQRAIKRGTGELEGATYEEITYEGYGPGGIAIIIETATDNRNRTVADIRHLMSRGGGSLGESGSVGWMFKRKGSIEVPRSAISEDDLMELLLDAGLEELESDDEQYFTVLTDVKDLEPVKKALEEAGIPFENAKIDMIPDNYVELDVENARKALKLIDALENSDDVQAVYSNMDMSESVMSVLEEE.

The protein belongs to the TACO1 family.

It is found in the cytoplasm. This is Probable transcriptional regulatory protein CT1665 from Chlorobaculum tepidum (strain ATCC 49652 / DSM 12025 / NBRC 103806 / TLS) (Chlorobium tepidum).